Consider the following 347-residue polypeptide: Haptoglobin (347 aa).

The N-terminal stretch at 1 to 18 (MSALGAVIALLLWGQLFA) is a signal peptide. The 58-residue stretch at 31–88 (DGCPKPPEIANGYVEHLVRYQCKKYYRLRTEGDGVYTLNNEKQWTNKAVGDKLPECEA) folds into the Sushi domain. Intrachain disulfides connect C52/C86, C90/C207, C250/C281, and C292/C322. The region spanning 103–345 (ILGGHLDAKG…IQDWVQKTIA (243 aa)) is the Peptidase S1 domain. N125, N148, N152, and N182 each carry an N-linked (GlcNAc...) asparagine glycan. Residues 259–264 (VPEKKT) form an interaction with CD163 region.

This sequence belongs to the peptidase S1 family. Tetramer of two alpha and two beta chains; disulfide-linked. The hemoglobin/haptoglobin complex is composed of a haptoglobin dimer bound to two hemoglobin alpha-beta dimers. Interacts with CD163. Interacts with ERGIC3. Expressed by the liver and secreted in plasma.

Its subcellular location is the secreted. Functionally, as a result of hemolysis, hemoglobin is found to accumulate in the kidney and is secreted in the urine. Haptoglobin captures, and combines with free plasma hemoglobin to allow hepatic recycling of heme iron and to prevent kidney damage. Haptoglobin also acts as an antioxidant, has antibacterial activity and plays a role in modulating many aspects of the acute phase response. Hemoglobin/haptoglobin complexes are rapidly cleared by the macrophage CD163 scavenger receptor expressed on the surface of liver Kupfer cells through an endocytic lysosomal degradation pathway. This chain is Haptoglobin (HP), found in Ateles geoffroyi (Black-handed spider monkey).